A 502-amino-acid chain; its full sequence is Glycerol kinase (502 aa).

Thr14 lines the ADP pocket. The ATP site is built by Thr14, Thr15, and Ser16. A sn-glycerol 3-phosphate-binding site is contributed by Thr14. Arg18 provides a ligand contact to ADP. 4 residues coordinate sn-glycerol 3-phosphate: Arg84, Glu85, Tyr136, and Asp246. Glycerol-binding residues include Arg84, Glu85, Tyr136, Asp246, and Gln247. ADP contacts are provided by Thr268 and Gly311. Thr268, Gly311, Gln315, and Gly412 together coordinate ATP. Residues Gly412 and Asn416 each contribute to the ADP site.

It belongs to the FGGY kinase family.

The catalysed reaction is glycerol + ATP = sn-glycerol 3-phosphate + ADP + H(+). It participates in polyol metabolism; glycerol degradation via glycerol kinase pathway; sn-glycerol 3-phosphate from glycerol: step 1/1. With respect to regulation, inhibited by fructose 1,6-bisphosphate (FBP). Functionally, key enzyme in the regulation of glycerol uptake and metabolism. Catalyzes the phosphorylation of glycerol to yield sn-glycerol 3-phosphate. This is Glycerol kinase from Pasteurella multocida (strain Pm70).